The following is a 294-amino-acid chain: Nucleotide-binding protein Dtur_1129 (294 aa).

ATP is bound at residue 10–17 (GLSGAGKS). 61–64 (DIRT) serves as a coordination point for GTP.

This sequence belongs to the RapZ-like family.

Functionally, displays ATPase and GTPase activities. In Dictyoglomus turgidum (strain DSM 6724 / Z-1310), this protein is Nucleotide-binding protein Dtur_1129.